Consider the following 123-residue polypeptide: Small ribosomal subunit protein bS16 (123 aa).

The interval 86 to 123 (PVRAEQTKQPQPKAKAQQRAKDQAERDAAAAAEAAAGE) is disordered. Residues 93-102 (KQPQPKAKAQ) are compositionally biased toward low complexity. The span at 104-113 (RAKDQAERDA) shows a compositional bias: basic and acidic residues. The segment covering 114–123 (AAAAEAAAGE) has biased composition (low complexity).

It belongs to the bacterial ribosomal protein bS16 family.

This Paramagnetospirillum magneticum (strain ATCC 700264 / AMB-1) (Magnetospirillum magneticum) protein is Small ribosomal subunit protein bS16.